The chain runs to 942 residues: Calcium-activated chloride channel regulator 2 (942 aa).

The N-terminal stretch at 1–32 is a signal peptide; the sequence is MTHRDSTGPVIGLKLVTLLFTLSPELLFLGAG. Topologically, residues 33 to 905 are extracellular; the sequence is LKLKENGYDG…SRDDLILKGV (873 aa). A metalloprotease domain region spans residues 54–205; it reads DLKLITNIKE…CSSDITGVFV (152 aa). N74 and N97 each carry an N-linked (GlcNAc...) asparagine glycan. Residue H164 coordinates Zn(2+). The active site involves E165. Zn(2+)-binding residues include H168 and D175. 4 N-linked (GlcNAc...) asparagine glycosylation sites follow: N231, N235, N254, and N286. Residues 311-483 form the VWFA domain; the sequence is VVCLVIDVSR…NGMTEAFVRI (173 aa). N-linked (GlcNAc...) asparagine glycosylation is found at N522, N580, N637, and N821. Residues 906–926 traverse the membrane as a helical segment; sequence LTTVGLIAILCLIMVVAHCIF. Residues 927-942 are Cytoplasmic-facing; sequence NRKKRPSRKENETKFL.

This sequence belongs to the CLCR family. The translation product is autoproteolytically cleaved by the metalloprotease domain in the endoplasmic reticulum into a N-terminal and a C-terminal products that remain physically associated with each other. The cleavage is necessary for calcium-activated chloride channel (CaCC) activation activity. Post-translationally, N-glycosylated. In terms of tissue distribution, highly expressed in eye, spleen, lung, kidney, uterus, and endothelial cells. Weakly expressed in heart and throughout the gastrointestinal tract. Highly expressed in mammary cell lines. Its expression in immortalized cell line HC11 correlates with slow or arrested growth. Re-expression in mammary tumor cells reduces colony survival.

The protein resides in the cell membrane. It localises to the basal cell membrane. It is found in the cell junction. In terms of biological role, plays a role in modulating chloride current across the plasma membrane in a calcium-dependent manner, and cell adhesion. Involved in basal cell adhesion and/or stratification of squamous epithelia. May act as a tumor suppressor in breast and colorectal cancer. Plays a key role for cell adhesion in the beginning stages of lung metastasis via the binding to ITGB4. This is Calcium-activated chloride channel regulator 2 (Clca2) from Mus musculus (Mouse).